Here is a 179-residue protein sequence, read N- to C-terminus: Ribosome maturation factor RimM (179 aa).

One can recognise a PRC barrel domain in the interval 95 to 174 (KDEFFYFDIL…QIFCTQDAFL (80 aa)).

It belongs to the RimM family. As to quaternary structure, binds ribosomal protein uS19.

It localises to the cytoplasm. An accessory protein needed during the final step in the assembly of 30S ribosomal subunit, possibly for assembly of the head region. Essential for efficient processing of 16S rRNA. May be needed both before and after RbfA during the maturation of 16S rRNA. It has affinity for free ribosomal 30S subunits but not for 70S ribosomes. This chain is Ribosome maturation factor RimM, found in Campylobacter jejuni subsp. jejuni serotype O:6 (strain 81116 / NCTC 11828).